The sequence spans 326 residues: Glyoxalase I (326 aa).

2 VOC domains span residues 22 to 167 and 182 to 322; these read LLNH…LITY and KFNH…VVPH. Histidine 25 contributes to the Zn(2+) binding site. Arginine 29 contributes to the substrate binding site. Glutamate 89 serves as a coordination point for Zn(2+). Residues asparagine 93, arginine 113, histidine 117, and 147–148 each bind substrate; that span reads RQ. Histidine 117 contributes to the Zn(2+) binding site. Glutamate 163 provides a ligand contact to Zn(2+). Residues glutamate 163 and glutamate 318 each act as proton donor/acceptor in the active site.

It belongs to the glyoxalase I family. As to quaternary structure, monomer. The cofactor is Zn(2+).

The enzyme catalyses (R)-S-lactoylglutathione = methylglyoxal + glutathione. The protein operates within secondary metabolite metabolism; methylglyoxal degradation; (R)-lactate from methylglyoxal: step 1/2. Functionally, catalyzes the conversion of hemimercaptal, formed from methylglyoxal and glutathione, to S-lactoylglutathione. Can use gamma-glutamylcysteine as a substrate. The sequence is that of Glyoxalase I from Saccharomyces cerevisiae (strain ATCC 204508 / S288c) (Baker's yeast).